Consider the following 349-residue polypeptide: Terpene cyclase rstn5 (349 aa).

5 helical membrane passes run 4–24 (LTPL…WGVF), 81–101 (FMVQ…TEGA), 116–136 (GLFS…FWFV), 158–178 (VVPS…FDPF), and 181–201 (GLDL…CISL). N222 carries an N-linked (GlcNAc...) asparagine glycan. The next 3 membrane-spanning stretches (helical) occupy residues 228–248 (VAVG…GLTG), 271–291 (LVLL…LLLA), and 309–329 (TLAV…AWAL).

This sequence belongs to the membrane-bound ascI terpene cyclase family.

The protein localises to the membrane. The protein operates within antifungal biosynthesis. In terms of biological role, cyclase; part of the gene cluster that mediates the biosynthesis of the tetrahydropyranyl antifungal agent restricticin that acts as an inhibitor of CYP51 and blocks the ergosterol biosynthesis. The highly reducing polyketide synthase rstn3, the short chain dehydrogenase rstn4, the cyclase rstn5, the FAD-dependent monooxygenase rstn6 and the enoylreductase rstn7 are required to generate the first stable intermediate desmethylrestrictinol. Rstn3 with rstn7 biosynthesize the first polyketide chain intermediate that is reduced by rstn4, followed by epoxidation by rstn6 before 6-endo cyclization via epoxide opening by rstn5 leads to desmethylrestrictinol. The methyltransferase rstn1 then catalyzes the C4 O-methylation of desmethylrestrictinol to produce restrictinol, and the nonribosomal peptide synthetase rstn8 catalyzes the C3 esterification of restrictinol with glycine that leads to restricticin. The protein is Terpene cyclase rstn5 of Aspergillus nomiae NRRL (strain ATCC 15546 / NRRL 13137 / CBS 260.88 / M93).